The primary structure comprises 228 residues: Small ribosomal subunit protein uS3 (228 aa).

In terms of domain architecture, KH type-2 spans 39 to 107 (IRKELNEKLK…PVNINIEEIK (69 aa)).

The protein belongs to the universal ribosomal protein uS3 family. As to quaternary structure, part of the 30S ribosomal subunit. Forms a tight complex with proteins S10 and S14.

Functionally, binds the lower part of the 30S subunit head. Binds mRNA in the 70S ribosome, positioning it for translation. In Hydrogenovibrio crunogenus (strain DSM 25203 / XCL-2) (Thiomicrospira crunogena), this protein is Small ribosomal subunit protein uS3.